The sequence spans 515 residues: Protein aaim-1 (515 aa).

The first 16 residues, 1–16 (MRLLFFFSILYTASLC), serve as a signal peptide directing secretion. Asparagine 46 and asparagine 127 each carry an N-linked (GlcNAc...) asparagine glycan. The segment at 248–267 (RRTDPNSKFKPRPTTSQSNG) is disordered. N-linked (GlcNAc...) asparagine glycosylation is present at asparagine 447.

Expressed in the terminal bulb of the pharynx and the posterior of the intestine (at protein level). Expressed by intestinal cells and secreted into the intestinal lumen (at protein level).

It localises to the secreted. Its function is as follows. Plays a role in promoting resistance to bacterial pathogens such as P.aeruginosa by inhibiting bacterial intestinal colonization. (Microbial infection) Promotes infection by microsporidian pathogens such as N.parisii in the early larval stages of development. Involved in ensuring the proper orientation and location of the spore proteins of N.parisii during intestinal cell invasion. The sequence is that of Protein aaim-1 from Caenorhabditis elegans.